A 462-amino-acid polypeptide reads, in one-letter code: L-seryl-tRNA(Sec) selenium transferase (462 aa).

Residue K292 is modified to N6-(pyridoxal phosphate)lysine.

The protein belongs to the SelA family. It depends on pyridoxal 5'-phosphate as a cofactor.

The protein localises to the cytoplasm. The enzyme catalyses L-seryl-tRNA(Sec) + selenophosphate + H(+) = L-selenocysteinyl-tRNA(Sec) + phosphate. Its pathway is aminoacyl-tRNA biosynthesis; selenocysteinyl-tRNA(Sec) biosynthesis; selenocysteinyl-tRNA(Sec) from L-seryl-tRNA(Sec) (bacterial route): step 1/1. Functionally, converts seryl-tRNA(Sec) to selenocysteinyl-tRNA(Sec) required for selenoprotein biosynthesis. In Geobacter metallireducens (strain ATCC 53774 / DSM 7210 / GS-15), this protein is L-seryl-tRNA(Sec) selenium transferase.